A 1370-amino-acid chain; its full sequence is DNA-directed RNA polymerase subunit beta (1370 aa).

Belongs to the RNA polymerase beta chain family. The RNAP catalytic core consists of 2 alpha, 1 beta, 1 beta' and 1 omega subunit. When a sigma factor is associated with the core the holoenzyme is formed, which can initiate transcription.

The catalysed reaction is RNA(n) + a ribonucleoside 5'-triphosphate = RNA(n+1) + diphosphate. In terms of biological role, DNA-dependent RNA polymerase catalyzes the transcription of DNA into RNA using the four ribonucleoside triphosphates as substrates. This Delftia acidovorans (strain DSM 14801 / SPH-1) protein is DNA-directed RNA polymerase subunit beta.